Here is a 182-residue protein sequence, read N- to C-terminus: Large ribosomal subunit protein uL16 (182 aa).

The disordered stretch occupies residues 140 to 182 (EKPTQVGKAPPKSSFLPSDETETAAAQAGTEASSASSVTPLES). Residues 162-176 (TAAAQAGTEASSASS) show a composition bias toward low complexity.

Belongs to the universal ribosomal protein uL16 family. Part of the 50S ribosomal subunit.

Functionally, binds 23S rRNA and is also seen to make contacts with the A and possibly P site tRNAs. The sequence is that of Large ribosomal subunit protein uL16 from Prochlorococcus marinus (strain SARG / CCMP1375 / SS120).